An 88-amino-acid chain; its full sequence is Small ribosomal subunit protein bS20 (88 aa).

The protein belongs to the bacterial ribosomal protein bS20 family.

In terms of biological role, binds directly to 16S ribosomal RNA. The polypeptide is Small ribosomal subunit protein bS20 (Clostridioides difficile (strain 630) (Peptoclostridium difficile)).